The following is a 489-amino-acid chain: Endothelial zinc finger protein induced by tumor necrosis factor alpha (489 aa).

The span at 1–15 (MKELDPKNDISEDKL) shows a compositional bias: basic and acidic residues. 2 disordered regions span residues 1-61 (MKEL…PLGI) and 98-122 (EKGACPPVRRGKNFSSTSDLSKPPM). 13 C2H2-type zinc fingers span residues 130-152 (YDCSECGKAFSRSSSLIKHQRIH), 158-180 (FECDTCGKHFIERSSLTIHQRVH), 186-208 (YACGDCGKAFSQRMNLTVHQRTH), 214-236 (YVCDVCGKAFRKTSSLTQHERIH), 242-264 (YACGDCGKAFSQNMHLIVHQRTH), 270-292 (YVCPECGRAFSQNMHLTEHQRTH), 298-320 (YACKECGKAFNKSSSLTLHQRNH), 326-348 (YVCGECGKAFSQSSYLIQHQRFH), 354-376 (FECSECGKAFSKNSSLTQHQRIH), 382-404 (YECYICKKHFTGRSSLIVHQIVH), 410-432 (YVCGECGKAFSQSAYLIEHQRIH), 438-460 (YRCGQCGKSFIKNSSLTVHQRIH), and 466-488 (YRCGECGKTFSRNTNLTRHLRIH).

This sequence belongs to the krueppel C2H2-type zinc-finger protein family. In terms of tissue distribution, highly expressed in placenta, followed by brain, testis, pancreas, heart, small intestine, muscle, uterus, prostate and peripheral blood leukocytes. Not detected in liver, lung, colon, stomach, salivary and thyroid gland.

It is found in the nucleus. May be involved in transcriptional regulation. The polypeptide is Endothelial zinc finger protein induced by tumor necrosis factor alpha (ZNF71) (Homo sapiens (Human)).